The sequence spans 211 residues: Pyrrolidone-carboxylate peptidase 1 (211 aa).

Residues Glu-79, Cys-142, and His-164 contribute to the active site.

Belongs to the peptidase C15 family. Homotetramer.

The protein localises to the cytoplasm. The enzyme catalyses Release of an N-terminal pyroglutamyl group from a polypeptide, the second amino acid generally not being Pro.. Removes 5-oxoproline from various penultimate amino acid residues except L-proline. The chain is Pyrrolidone-carboxylate peptidase 1 (pcp1) from Saccharolobus solfataricus (strain ATCC 35092 / DSM 1617 / JCM 11322 / P2) (Sulfolobus solfataricus).